The primary structure comprises 313 residues: 3'-5' exoribonuclease YhaM (313 aa).

The HD domain occupies 163–279 (HVVSMLRLAK…LHQIDLMDAS (117 aa)).

The protein belongs to the YhaM family.

Its function is as follows. Shows a 3'-5' exoribonuclease activity. This chain is 3'-5' exoribonuclease YhaM, found in Listeria monocytogenes serotype 4b (strain CLIP80459).